A 693-amino-acid chain; its full sequence is Transforming growth factor beta activator LRRC33 (693 aa).

A signal peptide spans 1 to 19; sequence MEFPPLWLCLGFHFLIVEW. Topologically, residues 20–651 are extracellular; it reads RSGPGTATAA…CKWEQVDTGL (632 aa). In terms of domain architecture, LRRNT spans 29-56; sequence ASQGGCKVVDGVADCRGLNLASVPSSLP. LRR repeat units lie at residues 58–79, 82–103, 106–127, 133–155, 158–179, 182–203, 206–227, 228–239, 251–272, and 273–294; these read HSRM…SLQA, RLEN…AFRE, HLRN…SAAA, GLRR…MLQN, SLEV…IFEG, HLVE…AFDG, ELRR…SLTQ, LRFLNVSYNILE, ELEI…PQCG, and KLHT…YNTS. Residues N74 and N85 are each glycosylated (N-linked (GlcNAc...) asparagine). N155 carries an N-linked (GlcNAc...) asparagine glycan. Residue N232 is glycosylated (N-linked (GlcNAc...) asparagine). N-linked (GlcNAc...) asparagine glycans are attached at residues N292, N309, and N312. 11 LRR repeats span residues 329–350, 353–374, 377–398, 403–424, 427–448, 463–484, 486–507, 512–533, 537–558, 559–580, and 585–605; these read ALRF…FLKK, SLSH…EHEP, ALTE…PGLT, NLRV…LFDN, SITT…VPVD, SLRS…PFQG, SLTH…SPLW, TLQV…MDFS, NLRA…KGSL, ALRT…VVSE, and GLQT…EGWG. 2 N-linked (GlcNAc...) asparagine glycosylation sites follow: N408 and N424. A glycan (N-linked (GlcNAc...) asparagine) is linked at N500. Positions 606 to 644 constitute an LRRCT domain; sequence ALQQHFKTVADLSMVTCNLSSKIVRVVELPEGLPQGCKW. N623 carries an N-linked (GlcNAc...) asparagine glycan. The helical transmembrane segment at 652 to 672 threads the bilayer; it reads FYLVLILPSCLTLLVACTVVF. Topologically, residues 673-693 are cytoplasmic; it reads LTFKKPLLQVIKSRCHWSSIY.

It belongs to the LRRC32/LRRC33 family. In terms of assembly, interacts with TGFB1; associates via disulfide bonds with the Latency-associated peptide chain (LAP) regulatory chain of TGFB1, leading to regulate activation of TGF-beta-1. Interacts (via LRR repeats) with TLR2, TLR3, TLR4, TLR9 and probably other Toll-like receptors. Interacts with CYBB/NOX2; the interaction is direct. In terms of processing, N-glycosylated. Mainly expressed in cells of hematopoietic origin, such as in immune organs such as lymph nodes, thymus and spleen. Among leukocytes, expressed at higher level in myeloid cell such as macrophages, neutrophils and dendritic cells. Highly expressed in central nervous system-resident macrophages, including microglia and perivascular macrophages.

The protein resides in the cell membrane. It localises to the endoplasmic reticulum membrane. Key regulator of transforming growth factor beta-1 (TGFB1) specifically required for microglia function in the nervous system. Required for activation of latent TGF-beta-1 in macrophages and microglia: associates specifically via disulfide bonds with the Latency-associated peptide (LAP), which is the regulatory chain of TGFB1, and regulates integrin-dependent activation of TGF-beta-1. TGF-beta-1 activation mediated by LRRC33/NRROS is highly localized: there is little spreading of TGF-beta-1 activated from one microglial cell to neighboring microglia, suggesting the existence of localized and selective activation of TGF-beta-1 by LRRC33/NRROS. Indirectly plays a role in Toll-like receptor (TLR) signaling: ability to inhibit TLR-mediated NF-kappa-B activation and cytokine production is probably a consequence of its role in TGF-beta-1 signaling. The chain is Transforming growth factor beta activator LRRC33 from Mus musculus (Mouse).